Here is a 289-residue protein sequence, read N- to C-terminus: Zinc finger matrin-type protein 3 (289 aa).

Matrin-type zinc fingers lie at residues 70 to 100 (LFCK…KLRN) and 147 to 177 (DYCK…RLRL). Disordered regions lie at residues 180–202 (AQSH…EGSE) and 265–289 (ESKQ…GYVQ). The Matrin-type 3 zinc-finger motif lies at 245–275 (FYCSMCNVGAGEEVEFRQHLESKQHKSKVSE). A compositionally biased stretch (basic and acidic residues) spans 265 to 282 (ESKQHKSKVSEQRYRSEM).

In terms of assembly, interacts with dsRNA. Highly expressed in brain, gut, lung, and testis.

The protein localises to the nucleus. It localises to the nucleolus. Functionally, acts as a bona fide target gene of p53/TP53. May play a role in the TP53-dependent growth regulatory pathway. May contribute to TP53-mediated apoptosis by regulation of TP53 expression and translocation to the nucleus and nucleolus. The polypeptide is Zinc finger matrin-type protein 3 (Rattus norvegicus (Rat)).